We begin with the raw amino-acid sequence, 152 residues long: Smith-Magenis syndrome chromosomal region candidate gene 5 protein homolog (152 aa).

The interval 41 to 77 is disordered; the sequence is TPCAGPSSQAPPQPPQASPPAAPDHSRTPSLLASSHS. Residues 49–62 show a composition bias toward pro residues; it reads QAPPQPPQASPPAA.

This is Smith-Magenis syndrome chromosomal region candidate gene 5 protein homolog (SMCR5) from Macaca fascicularis (Crab-eating macaque).